Here is a 342-residue protein sequence, read N- to C-terminus: S-adenosylmethionine:tRNA ribosyltransferase-isomerase (342 aa).

This sequence belongs to the QueA family. Monomer.

It localises to the cytoplasm. It catalyses the reaction 7-aminomethyl-7-carbaguanosine(34) in tRNA + S-adenosyl-L-methionine = epoxyqueuosine(34) in tRNA + adenine + L-methionine + 2 H(+). It participates in tRNA modification; tRNA-queuosine biosynthesis. Functionally, transfers and isomerizes the ribose moiety from AdoMet to the 7-aminomethyl group of 7-deazaguanine (preQ1-tRNA) to give epoxyqueuosine (oQ-tRNA). In Listeria innocua serovar 6a (strain ATCC BAA-680 / CLIP 11262), this protein is S-adenosylmethionine:tRNA ribosyltransferase-isomerase.